A 416-amino-acid polypeptide reads, in one-letter code: UDP-N-acetylglucosamine 1-carboxyvinyltransferase (416 aa).

Residue 22–23 (KN) participates in phosphoenolpyruvate binding. Arg-92 contributes to the UDP-N-acetyl-alpha-D-glucosamine binding site. The Proton donor role is filled by Cys-116. Cys-116 is subject to 2-(S-cysteinyl)pyruvic acid O-phosphothioketal. UDP-N-acetyl-alpha-D-glucosamine-binding positions include 121–125 (RPIDQ), Asp-304, and Ile-326.

This sequence belongs to the EPSP synthase family. MurA subfamily.

The protein localises to the cytoplasm. The catalysed reaction is phosphoenolpyruvate + UDP-N-acetyl-alpha-D-glucosamine = UDP-N-acetyl-3-O-(1-carboxyvinyl)-alpha-D-glucosamine + phosphate. The protein operates within cell wall biogenesis; peptidoglycan biosynthesis. Cell wall formation. Adds enolpyruvyl to UDP-N-acetylglucosamine. This is UDP-N-acetylglucosamine 1-carboxyvinyltransferase from Desulfatibacillum aliphaticivorans.